The sequence spans 90 residues: Small ribosomal subunit protein bS16 (90 aa).

The protein belongs to the bacterial ribosomal protein bS16 family. Part of the 30S ribosomal subunit.

In Bacillus subtilis (strain 168), this protein is Small ribosomal subunit protein bS16.